A 564-amino-acid chain; its full sequence is Probable beta-glucosidase btgE (564 aa).

The N-terminal stretch at Met1 to Ala18 is a signal peptide. The interval Ala285–Ala304 is disordered. Asn404 carries N-linked (GlcNAc...) asparagine glycosylation. Glu405 (proton donor) is an active-site residue. Glu501 (nucleophile) is an active-site residue.

This sequence belongs to the glycosyl hydrolase 17 family.

It is found in the secreted. The protein resides in the cell wall. It carries out the reaction Hydrolysis of terminal, non-reducing beta-D-glucosyl residues with release of beta-D-glucose.. It functions in the pathway glycan metabolism; cellulose degradation. Functionally, beta-glucosidases are one of a number of cellulolytic enzymes involved in the degradation of cellulosic biomass. Catalyzes the last step releasing glucose from the inhibitory cellobiose. In Aspergillus clavatus (strain ATCC 1007 / CBS 513.65 / DSM 816 / NCTC 3887 / NRRL 1 / QM 1276 / 107), this protein is Probable beta-glucosidase btgE (btgE).